The primary structure comprises 287 residues: Diaminopimelate epimerase (287 aa).

Residues N13, Q46, and N66 each coordinate substrate. C75 functions as the Proton donor in the catalytic mechanism. Substrate contacts are provided by residues 76-77 (GN), N166, N199, and 217-218 (ER). Residue C226 is the Proton acceptor of the active site. A substrate-binding site is contributed by 227 to 228 (GT).

The protein belongs to the diaminopimelate epimerase family. In terms of assembly, homodimer.

It is found in the cytoplasm. It catalyses the reaction (2S,6S)-2,6-diaminopimelate = meso-2,6-diaminopimelate. The protein operates within amino-acid biosynthesis; L-lysine biosynthesis via DAP pathway; DL-2,6-diaminopimelate from LL-2,6-diaminopimelate: step 1/1. Catalyzes the stereoinversion of LL-2,6-diaminopimelate (L,L-DAP) to meso-diaminopimelate (meso-DAP), a precursor of L-lysine and an essential component of the bacterial peptidoglycan. The sequence is that of Diaminopimelate epimerase from Paraburkholderia xenovorans (strain LB400).